The following is a 184-amino-acid chain: Ribosome-recycling factor (184 aa).

The segment at 137 to 158 (DSIKAKQKDGIPEDEAKRGQDE) is disordered.

It belongs to the RRF family.

It is found in the cytoplasm. Its function is as follows. Responsible for the release of ribosomes from messenger RNA at the termination of protein biosynthesis. May increase the efficiency of translation by recycling ribosomes from one round of translation to another. This chain is Ribosome-recycling factor, found in Desulforamulus reducens (strain ATCC BAA-1160 / DSM 100696 / MI-1) (Desulfotomaculum reducens).